Reading from the N-terminus, the 326-residue chain is UDP-N-acetylglucosamine transporter (326 aa).

Helical transmembrane passes span 4-24 (NLKYLSLGILVFQTTSLVLTM), 38-58 (LSSTAVVVAEFLKIMACIFLV), 136-156 (LGVYQWLSLVILMAGVAFVQW), 174-194 (FVGLMAVLTACFSSGFAGVYF), 212-232 (LGFFGSIFGLMGVYVYDGELV), 243-263 (QLTWIVVALQALGGLVIAAVI), 269-289 (ILKGFATSLSIILSTIISYFW), and 293-313 (FVPTSVFFLGAILVIAATFLY).

The protein belongs to the nucleotide-sugar transporter family. SLC35A subfamily. Interacts with SLC35A2; the interaction is reduced in the presence of SLC35A4. Found in a complex with SLC35A2 and SLC35A4. Interacts with MGAT4B. Post-translationally, O-Glcnacylation regulates the stability of SLC35A3 and the specific complex formation with MGAT4B.

The protein localises to the golgi apparatus membrane. It catalyses the reaction UMP(out) + UDP-N-acetyl-alpha-D-glucosamine(in) = UMP(in) + UDP-N-acetyl-alpha-D-glucosamine(out). Functionally, transports diphosphate-N-acetylglucosamine (UDP-GlcNAc) from the cytosol into the lumen of the Golgi apparatus, functioning as an antiporter that exchanges UDP-N-acetyl-alpha-D-glucosamine for UMP. May supply UDP-GlcNAc as substrate for Golgi-resident glycosyltransferases that generate highly branched, multiantennary complex N-glycans and keratan sulfate. However, the exact role of SLC35A3 still needs to be elucidated, it could be a member of a catalytically more efficient multiprotein complex rather than function independently as a single transporter. The protein is UDP-N-acetylglucosamine transporter (Slc35a3) of Mus musculus (Mouse).